The primary structure comprises 280 residues: UDP-3-O-acyl-N-acetylglucosamine deacetylase (280 aa).

Residues H79, H237, and D241 each coordinate Zn(2+). Catalysis depends on H264, which acts as the Proton donor.

The protein belongs to the LpxC family. The cofactor is Zn(2+).

The catalysed reaction is a UDP-3-O-[(3R)-3-hydroxyacyl]-N-acetyl-alpha-D-glucosamine + H2O = a UDP-3-O-[(3R)-3-hydroxyacyl]-alpha-D-glucosamine + acetate. It participates in glycolipid biosynthesis; lipid IV(A) biosynthesis; lipid IV(A) from (3R)-3-hydroxytetradecanoyl-[acyl-carrier-protein] and UDP-N-acetyl-alpha-D-glucosamine: step 2/6. Catalyzes the hydrolysis of UDP-3-O-myristoyl-N-acetylglucosamine to form UDP-3-O-myristoylglucosamine and acetate, the committed step in lipid A biosynthesis. This Chlamydia felis (strain Fe/C-56) (Chlamydophila felis) protein is UDP-3-O-acyl-N-acetylglucosamine deacetylase.